The following is a 930-amino-acid chain: A disintegrin and metalloproteinase with thrombospondin motifs 5 (930 aa).

The N-terminal stretch at 1–21 (MRLEWAPLLLLLLLLSASCLS) is a signal peptide. Residues 22-261 (LAADSPAAAP…PQTWWRRRRR (240 aa)) constitute a propeptide that is removed on maturation. Positions 31 to 53 (PAQDKTRQPQAAAAAAEPDQPQG) are enriched in low complexity. Disordered stretches follow at residues 31–68 (PAQD…LAGQ) and 207–231 (ASCE…SRRR). The Cysteine switch motif lies at 207–214 (ASCETPAS). Cys-209 serves as a coordination point for Zn(2+). Over residues 211 to 225 (TPASPSGPQESPSVH) the composition is skewed to polar residues. The Peptidase M12B domain maps to 267-476 (RQVELLLVAD…GHGNCLLDLP (210 aa)). Cystine bridges form between Cys-342-Cys-394, Cys-371-Cys-376, Cys-388-Cys-471, Cys-426-Cys-455, Cys-497-Cys-519, Cys-508-Cys-529, Cys-514-Cys-548, and Cys-542-Cys-553. Residue His-410 coordinates Zn(2+). Glu-411 is an active-site residue. His-414 and His-420 together coordinate Zn(2+). Positions 485 to 566 (ELPGQTYDAT…TKKKYYSTSS (82 aa)) constitute a Disintegrin domain. Residue Asn-498 is glycosylated (N-linked (GlcNAc...) asparagine). The 56-residue stretch at 567-622 (HGNWGSWGPWGQCSRSCGGGVQFAYRHCNNPAPRNSGRYCTGKRAIYRSCSVTPCP) folds into the TSP type-1 1 domain. C-linked (Man) tryptophan glycosylation is found at Trp-570 and Trp-573. Disulfide bonds link Cys-579/Cys-616, Cys-583/Cys-621, and Cys-594/Cys-606. O-linked (Fuc...) serine glycosylation is present at Ser-582. N-linked (GlcNAc...) asparagine glycans are attached at residues Asn-728, Asn-802, and Asn-807. Residues 732–874 (TKIIGTFNKK…HGSNKVGPHS (143 aa)) are spacer. The TSP type-1 2 domain occupies 875 to 929 (TQLQWVTGPWLACSRTCDTGWHTRTVQCQDGNRKLAKGCLLSQRPSAFKQCLLKK).

Zn(2+) serves as cofactor. In terms of processing, the precursor is cleaved by furin and PCSK7 outside of the cell. Glycosylated. Can be O-fucosylated by POFUT2 on a serine or a threonine residue found within the consensus sequence C1-X(2)-(S/T)-C2-G of the TSP type-1 repeat domains where C1 and C2 are the first and second cysteine residue of the repeat, respectively. Fucosylated repeats can then be further glycosylated by the addition of a beta-1,3-glucose residue by the glucosyltransferase, B3GALTL. Fucosylation mediates the efficient secretion of ADAMTS family members. Can also be C-glycosylated with one or two mannose molecules on tryptophan residues within the consensus sequence W-X-X-W of the TPRs, and N-glycosylated. These other glycosylations can also facilitate secretion. In terms of tissue distribution, expressed in skeletal muscle.

It localises to the secreted. The protein resides in the extracellular space. It is found in the extracellular matrix. Metalloproteinase that plays an important role in connective tissue organization, development, inflammation and cell migration. Extracellular matrix (ECM) degrading enzyme that shows proteolytic activity toward the hyalectan group of chondroitin sulfate proteoglycans (CSPGs) including ACAN, VCAN, BCAN and NCAN. Cleavage within the hyalectans occurs at Glu-Xaa recognition motifs. Plays a role in embryonic development, including limb and cardiac morphogenesis, and skeletal muscle development through its VCAN remodeling properties. Cleaves VCAN in the pericellular matrix surrounding myoblasts, facilitating myoblast contact and fusion which is required for skeletal muscle development and regeneration. Participates in the development of brown adipose tissue and browning of white adipose tissue. Plays an important role for T-lymphocyte migration from draining lymph nodes following viral infection. In Mus musculus (Mouse), this protein is A disintegrin and metalloproteinase with thrombospondin motifs 5 (Adamts5).